The chain runs to 762 residues: Homeobox-leucine zipper protein MERISTEM L1 (762 aa).

Residues 13–72 (MFDMTPKNSENDLGITGSHEEDFETKSGAEVTMENPLEEELQDPNQRPNKKKRYHRHTQR) form a disordered region. Positions 30-39 (SHEEDFETKS) are enriched in basic and acidic residues. A compositionally biased stretch (basic residues) spans 60–71 (PNKKKRYHRHTQ). The homeobox DNA-binding region spans 62–121 (KKKRYHRHTQRQIQELESFFKECPHPDDKQRKELSRELSLEPLQVKFWFQNKRTQMKAQH). The stretch at 110–192 (FQNKRTQMKA…DRISAIAAKY (83 aa)) forms a coiled coil. An START domain is found at 253–484 (SEADKPMIVE…LDRQCERLAS (232 aa)).

Belongs to the HD-ZIP homeobox family. Class IV subfamily. In terms of assembly, interacts with GAI/RGA2, RGA/RGA1/GRS, RGL2/SCL19 and PDF2. Interacts with AIL7/PLT7, ANT, BBM and AIL1.

It is found in the nucleus. In terms of biological role, probable transcription factor involved in cell specification and pattern formation during embryogenesis. Binds to the L1 box DNA sequence 5'-TAAATG[CT]A-3'. Plays a role in maintaining the identity of L1 cells, possibly by interacting with their L1 box or other target-gene promoters; binds to the LIP1 gene promoter and stimulates its expression upon imbibition. Acts as a positive regulator of gibberellins (GAs)-regulated epidermal gene expression (e.g. LIP1, LIP2, LTP1, FDH and PDF1). Functionally redundant to PDF2. Seems to promote cell differentiation. The chain is Homeobox-leucine zipper protein MERISTEM L1 from Arabidopsis thaliana (Mouse-ear cress).